Here is a 346-residue protein sequence, read N- to C-terminus: Sulfate/thiosulfate import ATP-binding protein CysA (346 aa).

The region spanning 3–237 is the ABC transporter domain; that stretch reads VRVANVRKEF…PNSPFVYGFI (235 aa). ATP is bound at residue 35–42; the sequence is GPSGSGKT.

It belongs to the ABC transporter superfamily. Sulfate/tungstate importer (TC 3.A.1.6) family. As to quaternary structure, the complex is composed of two ATP-binding proteins (CysA), two transmembrane proteins (CysT and CysW) and a solute-binding protein (CysP).

The protein resides in the cell inner membrane. The catalysed reaction is sulfate(out) + ATP + H2O = sulfate(in) + ADP + phosphate + H(+). It carries out the reaction thiosulfate(out) + ATP + H2O = thiosulfate(in) + ADP + phosphate + H(+). Part of the ABC transporter complex CysAWTP involved in sulfate/thiosulfate import. Responsible for energy coupling to the transport system. In Mesorhizobium japonicum (strain LMG 29417 / CECT 9101 / MAFF 303099) (Mesorhizobium loti (strain MAFF 303099)), this protein is Sulfate/thiosulfate import ATP-binding protein CysA.